The primary structure comprises 209 residues: Uridine kinase (209 aa).

12-19 provides a ligand contact to ATP; it reads GGTGSGKS.

This sequence belongs to the uridine kinase family.

Its subcellular location is the cytoplasm. The catalysed reaction is uridine + ATP = UMP + ADP + H(+). The enzyme catalyses cytidine + ATP = CMP + ADP + H(+). It functions in the pathway pyrimidine metabolism; CTP biosynthesis via salvage pathway; CTP from cytidine: step 1/3. The protein operates within pyrimidine metabolism; UMP biosynthesis via salvage pathway; UMP from uridine: step 1/1. The polypeptide is Uridine kinase (Clostridium tetani (strain Massachusetts / E88)).